The following is a 603-amino-acid chain: Prostaglandin G/H synthase 2 (603 aa).

A signal peptide spans 1 to 17; that stretch reads MLLPCALLAALLAAGHA. Residues 18 to 55 form the EGF-like domain; the sequence is ANPCCSLPCQNRGVCMTTGFDRYECDCTRTGYYGENCT. Cystine bridges form between Cys-21-Cys-32, Cys-22-Cys-145, Cys-26-Cys-42, and Cys-44-Cys-54. Residues Asn-53 and Asn-90 are each glycosylated (N-linked (GlcNAc...) asparagine). Arg-106 contacts substrate. An N-linked (GlcNAc...) asparagine glycan is attached at Asn-130. Catalysis depends on His-193, which acts as the Proton acceptor. Position 341 (Tyr-341) interacts with substrate. Tyr-371 functions as the For cyclooxygenase activity in the catalytic mechanism. His-374 lines the heme b pocket. A disulfide bond links Cys-555 and Cys-561.

Belongs to the prostaglandin G/H synthase family. In terms of assembly, homodimer. Requires heme b as cofactor.

The protein resides in the microsome membrane. The protein localises to the endoplasmic reticulum membrane. The catalysed reaction is (5Z,8Z,11Z,14Z)-eicosatetraenoate + AH2 + 2 O2 = prostaglandin H2 + A + H2O. The enzyme catalyses (9Z,12Z)-octadecadienoate + AH2 + O2 = (9R)-hydroxy-(10E,12Z)-octadecadienoate + A + H2O. It catalyses the reaction (9Z,12Z)-octadecadienoate + AH2 + O2 = (9S)-hydroxy-(10E,12Z)-octadecadienoate + A + H2O. It carries out the reaction (9Z,12Z)-octadecadienoate + AH2 + O2 = (13S)-hydroxy-(9Z,11E)-octadecadienoate + A + H2O. The catalysed reaction is (9Z,12Z)-octadecadienoate + AH2 + O2 = (13R)-hydroxy-(9Z,11E)-octadecadienoate + A + H2O. The protein operates within lipid metabolism; prostaglandin biosynthesis. In terms of biological role, dual cyclooxygenase and peroxidase in the biosynthesis pathway of prostanoids, a class of C20 oxylipins mainly derived from arachidonate ((5Z,8Z,11Z,14Z)-eicosatetraenoate, AA, C20:4(n-6)), with a particular role in the inflammatory response. The cyclooxygenase activity oxygenates AA to the hydroperoxy endoperoxide prostaglandin G2 (PGG2), and the peroxidase activity reduces PGG2 to the hydroxy endoperoxide prostaglandin H2 (PGH2), the precursor of all 2-series prostaglandins and thromboxanes. This complex transformation is initiated by abstraction of hydrogen at carbon 13 (with S-stereochemistry), followed by insertion of molecular O2 to form the endoperoxide bridge between carbon 9 and 11 that defines prostaglandins. The insertion of a second molecule of O2 (bis-oxygenase activity) yields a hydroperoxy group in PGG2 that is then reduced to PGH2 by two electrons. Similarly catalyzes successive cyclooxygenation and peroxidation of dihomo-gamma-linoleate (DGLA, C20:3(n-6)) and eicosapentaenoate (EPA, C20:5(n-3)) to corresponding PGH1 and PGH3, the precursors of 1- and 3-series prostaglandins. In an alternative pathway of prostanoid biosynthesis, converts 2-arachidonoyl lysophopholipids to prostanoid lysophopholipids, which are then hydrolyzed by intracellular phospholipases to release free prostanoids. Metabolizes 2-arachidonoyl glycerol yielding the glyceryl ester of PGH2, a process that can contribute to pain response. Generates lipid mediators from n-3 and n-6 polyunsaturated fatty acids (PUFAs) via a lipoxygenase-type mechanism. Oxygenates PUFAs to hydroperoxy compounds and then reduces them to corresponding alcohols. Plays a role in the generation of resolution phase interaction products (resolvins) during both sterile and infectious inflammation. Metabolizes docosahexaenoate (DHA, C22:6(n-3)) to 17R-HDHA, a precursor of the D-series resolvins (RvDs). As a component of the biosynthetic pathway of E-series resolvins (RvEs), converts eicosapentaenoate (EPA, C20:5(n-3)) primarily to 18S-HEPE that is further metabolized by ALOX5 and LTA4H to generate 18S-RvE1 and 18S-RvE2. In vascular endothelial cells, converts docosapentaenoate (DPA, C22:5(n-3)) to 13R-HDPA, a precursor for 13-series resolvins (RvTs) shown to activate macrophage phagocytosis during bacterial infection. In activated leukocytes, contributes to oxygenation of hydroxyeicosatetraenoates (HETE) to diHETES (5,15-diHETE and 5,11-diHETE). Can also use linoleate (LA, (9Z,12Z)-octadecadienoate, C18:2(n-6)) as substrate and produce hydroxyoctadecadienoates (HODEs) in a regio- and stereospecific manner, being (9R)-HODE ((9R)-hydroxy-(10E,12Z)-octadecadienoate) and (13S)-HODE ((13S)-hydroxy-(9Z,11E)-octadecadienoate) its major products. During neuroinflammation, plays a role in neuronal secretion of specialized preresolving mediators (SPMs) 15R-lipoxin A4 that regulates phagocytic microglia. The protein is Prostaglandin G/H synthase 2 (PTGS2) of Gallus gallus (Chicken).